We begin with the raw amino-acid sequence, 132 residues long: Histone H2A (132 aa).

Residues 1-10 (MTGGKSGGKA) show a composition bias toward gly residues. The interval 1-24 (MTGGKSGGKASGSKNAQSRSSKAG) is disordered. An N6-acetyllysine mark is found at Lys5 and Lys9. Residue Gln106 is modified to N5-methylglutamine. Ser129 is modified (phosphoserine). The short motif at 129-130 (SQ) is the [ST]-Q motif element.

Belongs to the histone H2A family. The nucleosome is a histone octamer containing two molecules each of H2A, H2B, H3 and H4 assembled in one H3-H4 heterotetramer and two H2A-H2B heterodimers. The octamer wraps approximately 147 bp of DNA. Phosphorylated to form H2AS128ph (gamma-H2A) in response to DNA double-strand breaks (DSBs) generated by exogenous genotoxic agents and by stalled replication forks. Phosphorylation is dependent on the DNA damage checkpoint kinases mec1/ATR and tel1/ATM, spreads on either side of a detected DSB site and may mark the surrounding chromatin for recruitment of proteins required for DNA damage signaling and repair. Gamma-H2A is removed from the DNA prior to the strand invasion-primer extension step of the repair process and subsequently dephosphorylated. Dephosphorylation is necessary for efficient recovery from the DNA damage checkpoint. Post-translationally, acetylated by esa1 to form H2AK4ac and H2AK7ac.

It localises to the nucleus. Its subcellular location is the chromosome. Core component of nucleosome which plays a central role in DNA double strand break (DSB) repair. Nucleosomes wrap and compact DNA into chromatin, limiting DNA accessibility to the cellular machineries which require DNA as a template. Histones thereby play a central role in transcription regulation, DNA repair, DNA replication and chromosomal stability. DNA accessibility is regulated via a complex set of post-translational modifications of histones, also called histone code, and nucleosome remodeling. In Emericella nidulans (strain FGSC A4 / ATCC 38163 / CBS 112.46 / NRRL 194 / M139) (Aspergillus nidulans), this protein is Histone H2A (htaA).